The primary structure comprises 377 residues: 3-dehydroquinate synthase (377 aa).

Residues 113–117 (GVIGD), 137–138 (TT), Lys150, Lys159, and 177–180 (FLDT) contribute to the NAD(+) site. Zn(2+) contacts are provided by Glu192, His254, and His273.

It belongs to the sugar phosphate cyclases superfamily. Dehydroquinate synthase family. It depends on Co(2+) as a cofactor. Zn(2+) serves as cofactor. NAD(+) is required as a cofactor.

It is found in the cytoplasm. It carries out the reaction 7-phospho-2-dehydro-3-deoxy-D-arabino-heptonate = 3-dehydroquinate + phosphate. The protein operates within metabolic intermediate biosynthesis; chorismate biosynthesis; chorismate from D-erythrose 4-phosphate and phosphoenolpyruvate: step 2/7. Its function is as follows. Catalyzes the conversion of 3-deoxy-D-arabino-heptulosonate 7-phosphate (DAHP) to dehydroquinate (DHQ). The polypeptide is 3-dehydroquinate synthase (Bartonella quintana (strain Toulouse) (Rochalimaea quintana)).